The following is a 486-amino-acid chain: Transcriptional adapter 2-beta (486 aa).

The ZZ-type zinc finger occupies leucine 4–phenylalanine 59. Positions 9, 12, 23, 26, 32, 35, 45, and 49 each coordinate Zn(2+). One can recognise an SANT domain in the interval glutamate 65–asparagine 118. Disordered regions lie at residues lysine 237–glutamine 291 and glutamate 343–leucine 377. Composition is skewed to gly residues over residues glycine 247–serine 262 and serine 367–leucine 377.

It is found in the nucleus. In terms of biological role, transcriptional coactivator. The protein is Transcriptional adapter 2-beta (tada2b) of Danio rerio (Zebrafish).